The chain runs to 506 residues: Maturase K (506 aa).

Belongs to the intron maturase 2 family. MatK subfamily.

It localises to the plastid. It is found in the chloroplast. In terms of biological role, usually encoded in the trnK tRNA gene intron. Probably assists in splicing its own and other chloroplast group II introns. This is Maturase K from Prunus persica (Peach).